Consider the following 280-residue polypeptide: Transcription factor ovo-like homolog lin-48 (280 aa).

C2H2-type zinc fingers lie at residues 133–155 (LTCH…IKCH), 161–183 (YLCT…TRTH), 189–212 (YKCE…RKVH), and 228–251 (FVCE…KVVH).

Its subcellular location is the nucleus. Transcription factor. Involved in development of the hindgut, the male tail, and the excretory duct cell. Involved in modulating function of excretory duct cells. Plays a role in left/right patterning of cell fates in the hindgut. This chain is Transcription factor ovo-like homolog lin-48, found in Caenorhabditis elegans.